The sequence spans 360 residues: tRNA/tmRNA (uracil-C(5))-methyltransferase (360 aa).

S-adenosyl-L-methionine is bound by residues Gln185, Tyr213, Asn218, Glu234, and Asp294. The active-site Nucleophile is Cys319. Glu353 serves as the catalytic Proton acceptor.

This sequence belongs to the class I-like SAM-binding methyltransferase superfamily. RNA M5U methyltransferase family. TrmA subfamily.

The enzyme catalyses uridine(54) in tRNA + S-adenosyl-L-methionine = 5-methyluridine(54) in tRNA + S-adenosyl-L-homocysteine + H(+). It catalyses the reaction uridine(341) in tmRNA + S-adenosyl-L-methionine = 5-methyluridine(341) in tmRNA + S-adenosyl-L-homocysteine + H(+). Dual-specificity methyltransferase that catalyzes the formation of 5-methyluridine at position 54 (m5U54) in all tRNAs, and that of position 341 (m5U341) in tmRNA (transfer-mRNA). The chain is tRNA/tmRNA (uracil-C(5))-methyltransferase from Nitratiruptor sp. (strain SB155-2).